The primary structure comprises 144 residues: MTLYRLHEADLEIPDAWQDQSINIFKLPASGPAREASFVISRDASQGDAPFADYVARQLENAEKQLPGFKLHKRWDINIHGHAAVLLDYQWQREGRDLMLRQVFIERRPAVLITTLTTTPADLPHHEPAWKQAMQTLVPRPTPS.

As to quaternary structure, homodimer. Two dimers interact with Tse6; this interaction is crucial for Tse6 loading onto VgrG1a.

Plays an essential role in toxin Tse6 delivery to target cells and specifically in the loading of Tse6 onto VgrG1a. The polypeptide is Effector EagT6 (Pseudomonas aeruginosa (strain ATCC 15692 / DSM 22644 / CIP 104116 / JCM 14847 / LMG 12228 / 1C / PRS 101 / PAO1)).